Consider the following 88-residue polypeptide: MPHLPELSKQEPSANTLVDNYRAKGEDLENSHHNNESRLAEGVHYDRNKAPALQEREKASTEKVNVEGGGASSSMVDNIRRGNPSGVA.

The interval Met1 to Ala88 is disordered. The segment covering Tyr21–Asn65 has biased composition (basic and acidic residues).

Functionally, involved in osmoadaptation. This is an uncharacterized protein from Emericella nidulans (strain FGSC A4 / ATCC 38163 / CBS 112.46 / NRRL 194 / M139) (Aspergillus nidulans).